A 487-amino-acid chain; its full sequence is Betaine aldehyde dehydrogenase (487 aa).

2 residues coordinate K(+): Ser26 and Asp93. 150-152 is a binding site for NAD(+); it reads GAW. The active-site Charge relay system is Lys162. NAD(+) contacts are provided by residues 176 to 179 and 229 to 232; these read KPSE and SVPT. Leu244 is a binding site for K(+). Glu250 serves as the catalytic Proton acceptor. Residues Gly252, Cys284, and Glu384 each contribute to the NAD(+) site. Cys284 functions as the Nucleophile in the catalytic mechanism. Position 284 is a cysteine sulfenic acid (-SOH) (Cys284). Residues Lys454 and Gly457 each contribute to the K(+) site. Glu461 acts as the Charge relay system in catalysis.

This sequence belongs to the aldehyde dehydrogenase family. Dimer of dimers. The cofactor is K(+).

The catalysed reaction is betaine aldehyde + NAD(+) + H2O = glycine betaine + NADH + 2 H(+). It functions in the pathway amine and polyamine biosynthesis; betaine biosynthesis via choline pathway; betaine from betaine aldehyde: step 1/1. Its function is as follows. Involved in the biosynthesis of the osmoprotectant glycine betaine. Catalyzes the irreversible oxidation of betaine aldehyde to the corresponding acid. The polypeptide is Betaine aldehyde dehydrogenase (Rhizobium etli (strain CIAT 652)).